The chain runs to 237 residues: Cysteine-rich venom protein DIS2 (237 aa).

The first 18 residues, M1–G18, serve as a signal peptide directing secretion. An SCP domain is found at V37–Y165. 7 disulfides stabilise this stretch: C74-C152, C91-C166, C147-C163, C185-C192, C188-C197, C201-C234, and C219-C232. One can recognise a ShKT domain in the interval C201 to C234.

The protein belongs to the CRISP family. In terms of tissue distribution, expressed by the venom gland.

It localises to the secreted. Functionally, weakly blocks contraction of smooth muscle elicited by high potassium-induced depolarization, but does not block caffeine-stimulated contraction. May target voltage-gated calcium channels on smooth muscle. In Dispholidus typus (Boomslang), this protein is Cysteine-rich venom protein DIS2.